Reading from the N-terminus, the 283-residue chain is Bifunctional protein FolD (283 aa).

Residues Gly-165–Ser-167, Ser-190, and Thr-231 contribute to the NADP(+) site.

This sequence belongs to the tetrahydrofolate dehydrogenase/cyclohydrolase family. Homodimer.

It carries out the reaction (6R)-5,10-methylene-5,6,7,8-tetrahydrofolate + NADP(+) = (6R)-5,10-methenyltetrahydrofolate + NADPH. It catalyses the reaction (6R)-5,10-methenyltetrahydrofolate + H2O = (6R)-10-formyltetrahydrofolate + H(+). The protein operates within one-carbon metabolism; tetrahydrofolate interconversion. Functionally, catalyzes the oxidation of 5,10-methylenetetrahydrofolate to 5,10-methenyltetrahydrofolate and then the hydrolysis of 5,10-methenyltetrahydrofolate to 10-formyltetrahydrofolate. The protein is Bifunctional protein FolD of Nocardia farcinica (strain IFM 10152).